A 175-amino-acid chain; its full sequence is MSNLYYTVFDTDVCTVLLVLTLNGFVCYASLGKPAIELKGIMAKDFSSLPYQLKPLSTMTGDKIEIDKSVEKFKLLVETPSVSQDIKTELLFGTPLQRKVWKELVKIPAGQTRTYKELADLLGTHSRVIGNCCGANRIAVLIPCHRVVGANNKLTGYRWGKSYKEYLLKQEGIGI.

Residues Tyr115 and Arg127 each coordinate DNA. The active-site Nucleophile; methyl group acceptor is Cys144.

The protein belongs to the MGMT family.

The protein localises to the nucleus. It carries out the reaction a 6-O-methyl-2'-deoxyguanosine in DNA + L-cysteinyl-[protein] = S-methyl-L-cysteinyl-[protein] + a 2'-deoxyguanosine in DNA. It catalyses the reaction a 4-O-methyl-thymidine in DNA + L-cysteinyl-[protein] = a thymidine in DNA + S-methyl-L-cysteinyl-[protein]. In terms of biological role, involved in the cellular defense against the biological effects of O6-methylguanine (O6-MeG) and O4-methylthymine (O4-MeT) in DNA. Repairs the methylated nucleobase in DNA by stoichiometrically transferring the methyl group to a cysteine residue in the enzyme. This is a suicide reaction: the enzyme is irreversibly inactivated. The polypeptide is Methylated-DNA--protein-cysteine methyltransferase (MGT1) (Candida albicans (strain SC5314 / ATCC MYA-2876) (Yeast)).